The sequence spans 248 residues: Triosephosphate isomerase (248 aa).

14-16 (NWK) is a substrate binding site. H99 (electrophile) is an active-site residue. E170 functions as the Proton acceptor in the catalytic mechanism. Residues G176, S212, and 233–234 (GG) contribute to the substrate site.

It belongs to the triosephosphate isomerase family. As to quaternary structure, homodimer.

It is found in the cytoplasm. It carries out the reaction D-glyceraldehyde 3-phosphate = dihydroxyacetone phosphate. It functions in the pathway carbohydrate biosynthesis; gluconeogenesis. It participates in carbohydrate degradation; glycolysis; D-glyceraldehyde 3-phosphate from glycerone phosphate: step 1/1. Its function is as follows. Involved in the gluconeogenesis. Catalyzes stereospecifically the conversion of dihydroxyacetone phosphate (DHAP) to D-glyceraldehyde-3-phosphate (G3P). The sequence is that of Triosephosphate isomerase from Bordetella bronchiseptica (strain ATCC BAA-588 / NCTC 13252 / RB50) (Alcaligenes bronchisepticus).